Here is a 1097-residue protein sequence, read N- to C-terminus: UPF0746 protein DDB_G0281095 (1097 aa).

Residues 1 to 11 (MVNNNKRKEIE) show a composition bias toward basic and acidic residues. A disordered region spans residues 1–24 (MVNNNKRKEIENQENDNDDDNDGL). The segment covering 12 to 22 (NQENDNDDDND) has biased composition (acidic residues). Positions 35–69 (YDSIRSKELQTIAKSLGLPNNGKKQEVYKRIEGYF) constitute an SAP domain. A coiled-coil region spans residues 329–521 (FKEIREIHQQ…QLILELNEIQ (193 aa)).

Belongs to the UPF0746 family.

This Dictyostelium discoideum (Social amoeba) protein is UPF0746 protein DDB_G0281095.